Here is a 729-residue protein sequence, read N- to C-terminus: MLYKGDTLYLDWLEDGIAELVFDAPGSVNKLDTATVASLGQALEVLEKQHDLKGLLLRSNKAAFIVGADITEFLSLFLVPEEQLSQWLHFANSVFNRLEDLPVPTLAAVNGYALGGGCECVLATDYRLATPDLRIGLPETKLGIMPGFGGSVRLPRMLGADSALEIIAAGKDVGAEHALKIGLVDGVVKQEKLIEGAIAVLRQAITGDLDWRAKRQPKLEPLKLSKIEAAMSFTIAKGMVAQTAGKHYPAPMTAVKTIEAAARFGREEALNLENKSFVPLAHTNEARALVGIFLNDQYVKGKAKKLTKDIETPKQAAVLGAGIMGGGIAYQSAWKGVPVIMKDINDKSLNLGMTEAAKLLNKQLERGKIDGLKLAGVISTIHPTLDYAGFDRVDVVVEAVVENPKVKKAVLAETEQKVRPETVLASNTSTIPIGELASALERPENFCGMHFFNPVHRMPLVEIIRGEKSSDETIAKVVAWASKMGKTPIVVNDCPGFFVNRVLFPYFAGFSQLLRDGADFRKVDKVMEKQFGWPMGPAYLLDVVGIDTAHHAQAVMAAGFPQRMQKEYRDAIDALFDASRFGQKNGLGFWRYKEDSKGKPKKEEDAAVDDLLASVSQPKRDFSDDEIIARMMIPMINEVVRCLEEGIIASPAEADMALVYGLGFPPFHGGAFRWLDTQGSAKYLDMAQQYQHLGPLYEVPEGLRNKARHNEPYYPPVEPARPVGSLKTA.

The tract at residues 1-189 is enoyl-CoA hydratase/isomerase; sequence MLYKGDTLYL…KIGLVDGVVK (189 aa). Aspartate 296 provides a ligand contact to substrate. Residues 311 to 729 are 3-hydroxyacyl-CoA dehydrogenase; that stretch reads ETPKQAAVLG…ARPVGSLKTA (419 aa). NAD(+) is bound by residues methionine 324, aspartate 343, 400 to 402, lysine 407, and serine 429; that span reads VVE. Histidine 450 acts as the For 3-hydroxyacyl-CoA dehydrogenase activity in catalysis. Residue asparagine 453 participates in NAD(+) binding. Residues asparagine 500 and tyrosine 660 each coordinate substrate. The disordered stretch occupies residues 708-729; that stretch reads RHNEPYYPPVEPARPVGSLKTA.

The protein in the N-terminal section; belongs to the enoyl-CoA hydratase/isomerase family. It in the C-terminal section; belongs to the 3-hydroxyacyl-CoA dehydrogenase family. As to quaternary structure, heterotetramer of two alpha chains (FadB) and two beta chains (FadA).

The catalysed reaction is a (3S)-3-hydroxyacyl-CoA + NAD(+) = a 3-oxoacyl-CoA + NADH + H(+). It carries out the reaction a (3S)-3-hydroxyacyl-CoA = a (2E)-enoyl-CoA + H2O. The enzyme catalyses a 4-saturated-(3S)-3-hydroxyacyl-CoA = a (3E)-enoyl-CoA + H2O. It catalyses the reaction (3S)-3-hydroxybutanoyl-CoA = (3R)-3-hydroxybutanoyl-CoA. The catalysed reaction is a (3Z)-enoyl-CoA = a 4-saturated (2E)-enoyl-CoA. It carries out the reaction a (3E)-enoyl-CoA = a 4-saturated (2E)-enoyl-CoA. It participates in lipid metabolism; fatty acid beta-oxidation. In terms of biological role, involved in the aerobic and anaerobic degradation of long-chain fatty acids via beta-oxidation cycle. Catalyzes the formation of 3-oxoacyl-CoA from enoyl-CoA via L-3-hydroxyacyl-CoA. It can also use D-3-hydroxyacyl-CoA and cis-3-enoyl-CoA as substrate. The sequence is that of Fatty acid oxidation complex subunit alpha from Salmonella choleraesuis (strain SC-B67).